A 98-amino-acid chain; its full sequence is Plastocyanin (98 aa).

A Plastocyanin-like domain is found at 1–98 (DVTVKLGADS…AGMKGTITVQ (98 aa)). Residues His-38, Cys-83, His-86, and Met-91 each coordinate Cu cation.

It belongs to the plastocyanin family. Cu(2+) serves as cofactor.

The protein localises to the plastid. Its subcellular location is the chloroplast thylakoid membrane. Functionally, participates in electron transfer between P700 and the cytochrome b6-f complex in photosystem I. The sequence is that of Plastocyanin (petE) from Scenedesmus fuscus (Green alga).